Here is a 341-residue protein sequence, read N- to C-terminus: Tetraacyldisaccharide 4'-kinase (341 aa).

ATP is bound at residue 64–71 (AVGGSGKT).

This sequence belongs to the LpxK family.

It catalyses the reaction a lipid A disaccharide + ATP = a lipid IVA + ADP + H(+). It participates in glycolipid biosynthesis; lipid IV(A) biosynthesis; lipid IV(A) from (3R)-3-hydroxytetradecanoyl-[acyl-carrier-protein] and UDP-N-acetyl-alpha-D-glucosamine: step 6/6. Its function is as follows. Transfers the gamma-phosphate of ATP to the 4'-position of a tetraacyldisaccharide 1-phosphate intermediate (termed DS-1-P) to form tetraacyldisaccharide 1,4'-bis-phosphate (lipid IVA). The protein is Tetraacyldisaccharide 4'-kinase of Azoarcus sp. (strain BH72).